We begin with the raw amino-acid sequence, 310 residues long: Putative S-adenosyl-L-methionine-dependent methyltransferase ML2640 (310 aa).

S-adenosyl-L-methionine contacts are provided by residues D132 and 161 to 162; that span reads DL.

It belongs to the UPF0677 family.

Exhibits S-adenosyl-L-methionine-dependent methyltransferase activity. The sequence is that of Putative S-adenosyl-L-methionine-dependent methyltransferase ML2640 from Mycobacterium leprae (strain TN).